The sequence spans 69 residues: Sec-independent protein translocase protein TatA (69 aa).

The chain crosses the membrane as a helical span at residues 1–21; sequence MMPGPFELIIILVIVLLLFGG.

This sequence belongs to the TatA/E family. As to quaternary structure, the Tat system comprises two distinct complexes: a TatABC complex, containing multiple copies of TatA, TatB and TatC subunits, and a separate TatA complex, containing only TatA subunits. Substrates initially bind to the TatABC complex, which probably triggers association of the separate TatA complex to form the active translocon.

The protein resides in the cell inner membrane. Part of the twin-arginine translocation (Tat) system that transports large folded proteins containing a characteristic twin-arginine motif in their signal peptide across membranes. TatA could form the protein-conducting channel of the Tat system. The chain is Sec-independent protein translocase protein TatA from Vesicomyosocius okutanii subsp. Calyptogena okutanii (strain HA).